A 196-amino-acid polypeptide reads, in one-letter code: ATP-dependent Clp protease proteolytic subunit (196 aa).

Ser97 serves as the catalytic Nucleophile. The active site involves His122.

Belongs to the peptidase S14 family. Fourteen ClpP subunits assemble into 2 heptameric rings which stack back to back to give a disk-like structure with a central cavity, resembling the structure of eukaryotic proteasomes.

Its subcellular location is the cytoplasm. The catalysed reaction is Hydrolysis of proteins to small peptides in the presence of ATP and magnesium. alpha-casein is the usual test substrate. In the absence of ATP, only oligopeptides shorter than five residues are hydrolyzed (such as succinyl-Leu-Tyr-|-NHMec, and Leu-Tyr-Leu-|-Tyr-Trp, in which cleavage of the -Tyr-|-Leu- and -Tyr-|-Trp bonds also occurs).. Cleaves peptides in various proteins in a process that requires ATP hydrolysis. Has a chymotrypsin-like activity. Plays a major role in the degradation of misfolded proteins. In Lacticaseibacillus paracasei (strain ATCC 334 / BCRC 17002 / CCUG 31169 / CIP 107868 / KCTC 3260 / NRRL B-441) (Lactobacillus paracasei), this protein is ATP-dependent Clp protease proteolytic subunit.